Reading from the N-terminus, the 716-residue chain is Polyribonucleotide nucleotidyltransferase (716 aa).

Asp-485 and Asp-491 together coordinate Mg(2+). One can recognise a KH domain in the interval 552-611; it reads PKITTISVPKEKIRDVIGSGGKVIREIVEYSGAKVDIGDDGTVTIAASNDEQAQKAIARI. The region spanning 621–689 is the S1 motif domain; that stretch reads GRIYEGKVVK…DRGKVKLSMR (69 aa).

This sequence belongs to the polyribonucleotide nucleotidyltransferase family. Mg(2+) serves as cofactor.

The protein resides in the cytoplasm. It carries out the reaction RNA(n+1) + phosphate = RNA(n) + a ribonucleoside 5'-diphosphate. In terms of biological role, involved in mRNA degradation. Catalyzes the phosphorolysis of single-stranded polyribonucleotides processively in the 3'- to 5'-direction. The polypeptide is Polyribonucleotide nucleotidyltransferase (Gluconobacter oxydans (strain 621H) (Gluconobacter suboxydans)).